Consider the following 450-residue polypeptide: ATP-dependent protease ATPase subunit HslU (450 aa).

Residues V29, 71–76, D261, E328, and R400 each bind ATP; that span reads GVGKTE.

The protein belongs to the ClpX chaperone family. HslU subfamily. As to quaternary structure, a double ring-shaped homohexamer of HslV is capped on each side by a ring-shaped HslU homohexamer. The assembly of the HslU/HslV complex is dependent on binding of ATP.

Its subcellular location is the cytoplasm. Functionally, ATPase subunit of a proteasome-like degradation complex; this subunit has chaperone activity. The binding of ATP and its subsequent hydrolysis by HslU are essential for unfolding of protein substrates subsequently hydrolyzed by HslV. HslU recognizes the N-terminal part of its protein substrates and unfolds these before they are guided to HslV for hydrolysis. The chain is ATP-dependent protease ATPase subunit HslU from Rickettsia prowazekii (strain Madrid E).